The primary structure comprises 271 residues: Aliphatic sulfonates import ATP-binding protein SsuB (271 aa).

The region spanning I13–L234 is the ABC transporter domain. Residue G45–S52 participates in ATP binding. Residues E250–N271 are disordered. The segment covering R260–N271 has biased composition (polar residues).

Belongs to the ABC transporter superfamily. Aliphatic sulfonates importer (TC 3.A.1.17.2) family. The complex is composed of two ATP-binding proteins (SsuB), two transmembrane proteins (SsuC) and a solute-binding protein (SsuA).

Its subcellular location is the cell inner membrane. It carries out the reaction ATP + H2O + aliphatic sulfonate-[sulfonate-binding protein]Side 1 = ADP + phosphate + aliphatic sulfonateSide 2 + [sulfonate-binding protein]Side 1.. Its function is as follows. Part of the ABC transporter complex SsuABC involved in aliphatic sulfonates import. Responsible for energy coupling to the transport system. The chain is Aliphatic sulfonates import ATP-binding protein SsuB from Yersinia pestis bv. Antiqua (strain Antiqua).